Consider the following 361-residue polypeptide: Free fatty acid receptor 4 (361 aa).

Residues 1 to 45 (MSPECARAAGDAPLRSLEQANRTRFSFFSDVKGDHRLLLAAVETT) lie on the Extracellular side of the membrane. The N-linked (GlcNAc...) asparagine glycan is linked to Asn21. Residues 46-66 (VLALIFAVSLLGNVCALVLVA) form a helical membrane-spanning segment. Over 67–77 (RRRRRGTTACL) the chain is Cytoplasmic. A helical transmembrane segment spans residues 78–98 (VLNLFCADLLFISAIPLVLAV). Topologically, residues 99–112 (RWTEAWLLGPVACH) are extracellular. Cys111 and Cys194 are disulfide-bonded. A helical membrane pass occupies residues 113–133 (LLFYLMTLSGSVTILTLAAVS). Residues 134–156 (LERMVCIVHLQRGVRGPGRRARA) are Cytoplasmic-facing. A helical membrane pass occupies residues 157–177 (VLLTLIWGYSAVAALPLCVFF). Residues 178–204 (RVVPQRLPGADQEISICTLIWPTIAGE) lie on the Extracellular side of the membrane. The chain crosses the membrane as a helical span at residues 205–225 (ISWDVSFVTLNFLVPGLVIVI). Residues 226–268 (SYSKILQITKASRKRLTVSLAYSESHQIRVSQQDFRLFRTLFL) are Cytoplasmic-facing. The helical transmembrane segment at 269 to 289 (LMVSFFIMWSPIIITILLILI) threads the bilayer. Topologically, residues 290-295 (QNFKQD) are extracellular. The chain crosses the membrane as a helical span at residues 296-316 (LVIWPSLFFWVVAFTFANSAL). At 317-361 (NPILYNMTLCRNEWKKIFCCFWFPEKGAILTDTSVKRNDLSVISG) the chain is on the cytoplasmic side. Phosphothreonine is present on residues Thr347 and Thr349. 3 positions are modified to phosphoserine: Ser350, Ser357, and Ser360.

This sequence belongs to the G-protein coupled receptor 1 family. As to quaternary structure, interacts (via C-terminus) with ARRB2 following LCFAs stimulation. In terms of processing, phosphorylated at two clusters of Ser and Thr residues located in the intracellular C-terminus. Prerequisite for FFAR4 internalization via an ARRB2-dependent pathway. Highly expressed in lung and colon.

It localises to the cell membrane. The protein localises to the endosome membrane. It is found in the lysosome membrane. The protein resides in the cell projection. Its subcellular location is the cilium membrane. In terms of biological role, G-protein-coupled receptor for long-chain fatty acids (LCFAs) with a major role in adipogenesis, energy metabolism and inflammation. Signals via G-protein and beta-arrestin pathways. LCFAs sensing initiates activation of phosphoinositidase C-linked G proteins GNAQ and GNA11 (G(q)/G(11)), inducing a variety of cellular responses via second messenger pathways such as intracellular calcium mobilization, modulation of cyclic adenosine monophosphate (cAMP) production, and mitogen-activated protein kinases (MAPKs). After LCFAs binding, associates with beta-arrestin ARRB2 that acts as an adapter protein coupling the receptor to specific downstream signaling pathways, as well as mediating receptor endocytosis. In response to dietary fats, plays an important role in the regulation of adipocyte proliferation and differentiation. Acts as a receptor for omega-3 polyunsaturated fatty acids (PUFAs) at primary cilium of perivascular preadipocytes, initiating an adipogenic program via cAMP and CTCF-dependent chromatin remodeling that ultimately results in transcriptional activation of adipogenic genes and cell cycle entry. Induces differentiation of brown and beige adipocytes probably via autocrine and endocrine functions of FGF21 hormone. Contributes to the thermogenic activation of brown adipose tissue and the browning of white adipose tissue. Activates brown adipocytes by initiating intracellular calcium signaling leading to mitochondrial depolarization and fission, and overall increased mitochondrial respiration. Consequently stimulates fatty acid uptake and oxidation in mitochondria together with UCP1-mediated thermogenic respiration, eventually reducing fat mass. Regulates bi-potential differentiation of bone marrow mesenchymal stem cells toward osteoblasts or adipocytes likely by up-regulating distinct integrins. In response to dietary fats regulates hormone secretion and appetite. Stimulates GIP and GLP1 secretion from enteroendocrine cells as well as GCG secretion in pancreatic alpha cells, thereby playing a role in the regulation of blood glucose levels. Negatively regulates glucose-induced SST secretion in pancreatic delta cells. Mediates LCFAs inhibition of GHRL secretion, an appetite-controlling hormone. In taste buds, contributes to sensing of dietary fatty acids by the gustatory system. During the inflammatory response, promotes anti-inflammatory M2 macrophage differentiation in adipose tissue. Mediates the anti-inflammatory effects of omega-3 PUFAs via inhibition of NLRP3 inflammasome activation. In this pathway, interacts with adapter protein ARRB2 and inhibits the priming step triggered by Toll-like receptors (TLRs) at the level of TAK1 and TAB1. Further inhibits the activation step when ARRB2 directly associates with NLRP3, leading to inhibition of pro-inflammatory cytokine release. Mediates LCFAs anti-apoptotic effects. This chain is Free fatty acid receptor 4 (FFAR4), found in Macaca fascicularis (Crab-eating macaque).